The primary structure comprises 157 residues: Electron transfer flavoprotein regulatory factor 1 homolog (157 aa).

This sequence belongs to the complex I LYR family.

Its subcellular location is the mitochondrion. This is Electron transfer flavoprotein regulatory factor 1 homolog from Dictyostelium discoideum (Social amoeba).